The following is a 165-amino-acid chain: uncharacterized protein (165 aa).

A helical transmembrane segment spans residues 16-36; it reads ASISSILNFFFFYIMEYFVAV.

The protein belongs to the asfivirus F165R family.

It localises to the host membrane. This is an uncharacterized protein from Ornithodoros (relapsing fever ticks).